The primary structure comprises 242 residues: Zinc import ATP-binding protein ZnuC (242 aa).

In terms of domain architecture, ABC transporter spans 24–241 (INVKNLSFFY…EKFLKMFSSY (218 aa)). Residue 56–63 (GPNGGGKT) coordinates ATP.

This sequence belongs to the ABC transporter superfamily. Zinc importer (TC 3.A.1.15.5) family. The complex is composed of two ATP-binding proteins (ZnuC), two transmembrane proteins (ZnuB) and a solute-binding protein (ZnuA).

It is found in the cell inner membrane. It carries out the reaction Zn(2+)(out) + ATP(in) + H2O(in) = Zn(2+)(in) + ADP(in) + phosphate(in) + H(+)(in). Part of the ABC transporter complex ZnuABC involved in zinc import. Responsible for energy coupling to the transport system. This chain is Zinc import ATP-binding protein ZnuC, found in Ehrlichia canis (strain Jake).